The sequence spans 156 residues: SPbeta prophage-derived uncharacterized protein YosH (156 aa).

The protein is SPbeta prophage-derived uncharacterized protein YosH (yosH) of Bacillus subtilis (strain 168).